The sequence spans 62 residues: MLTLKKSMLLIFFLGTINFSLCEQERNADEEERRDEPEERDVEVQKRILPFLAGLFSKILGK.

A signal peptide spans 1–22 (MLTLKKSMLLIFFLGTINFSLC). Residues 23-45 (EQERNADEEERRDEPEERDVEVQ) constitute a propeptide that is removed on maturation. At leucine 60 the chain carries Leucine amide. Residue glycine 61 is a propeptide.

Expressed by the skin glands.

It localises to the secreted. Antimicrobial peptide. The sequence is that of Pelophylaxin-4 from Pelophylax fukienensis (Fukien gold-striped pond frog).